The sequence spans 120 residues: U-scoloptoxin(16)-Er2a (120 aa).

Positions 1–26 (MNTVSVVQFLAVGCAVFVLYGRGVFA) are cleaved as a signal peptide.

This sequence belongs to the scoloptoxin-16 family. Contains 4 disulfide bonds. In terms of tissue distribution, expressed by the venom gland.

It localises to the secreted. The sequence is that of U-scoloptoxin(16)-Er2a from Ethmostigmus rubripes (Giant centipede).